The chain runs to 204 residues: Large ribosomal subunit protein bL25 (204 aa).

It belongs to the bacterial ribosomal protein bL25 family. CTC subfamily. Part of the 50S ribosomal subunit; part of the 5S rRNA/L5/L18/L25 subcomplex. Contacts the 5S rRNA. Binds to the 5S rRNA independently of L5 and L18.

Functionally, this is one of the proteins that binds to the 5S RNA in the ribosome where it forms part of the central protuberance. The chain is Large ribosomal subunit protein bL25 from Pseudomonas syringae pv. syringae (strain B728a).